The sequence spans 376 residues: 23S rRNA (uracil(747)-C(5))-methyltransferase RlmC (376 aa).

Residues cysteine 3, cysteine 11, cysteine 14, and cysteine 87 each contribute to the [4Fe-4S] cluster site. S-adenosyl-L-methionine-binding residues include glutamine 212, phenylalanine 241, glutamate 262, and asparagine 307. Cysteine 334 functions as the Nucleophile in the catalytic mechanism.

Belongs to the class I-like SAM-binding methyltransferase superfamily. RNA M5U methyltransferase family. RlmC subfamily.

The catalysed reaction is uridine(747) in 23S rRNA + S-adenosyl-L-methionine = 5-methyluridine(747) in 23S rRNA + S-adenosyl-L-homocysteine + H(+). Its function is as follows. Catalyzes the formation of 5-methyl-uridine at position 747 (m5U747) in 23S rRNA. This chain is 23S rRNA (uracil(747)-C(5))-methyltransferase RlmC, found in Salmonella newport (strain SL254).